The sequence spans 305 residues: MQNLARDIDAILITGPTASGKSALGVKLAQRHGGVVINADSMQVYGTLKILTARPDESEMGGVEHFLYGHVPPDRAYSTGAWLREAEALVARLRIEGRMPVFVGGTGLYFKALTGGLSDMPEVPHAIRQRLRKRLMEEGAEALHYELSALDPETAQRVRSGDGQRIVRALEVMEATGRPIGFYQQSRGPVIIDATRARKIVVLPERPVLHSRINRRFEAMLGMGAVEEVRALLALDLPLEMPAMKAIGVQQIAAMLKGEMSEAQAIEAGAAQTRQYAKRQMTWFRNQLDETWQRIDAAEALGENH.

Residue 15–22 (GPTASGKS) participates in ATP binding. 17–22 (TASGKS) is a substrate binding site. Interaction with substrate tRNA stretches follow at residues 40–43 (DSMQ) and 164–168 (QRIVR).

Belongs to the IPP transferase family. In terms of assembly, monomer. Mg(2+) serves as cofactor.

The catalysed reaction is adenosine(37) in tRNA + dimethylallyl diphosphate = N(6)-dimethylallyladenosine(37) in tRNA + diphosphate. Catalyzes the transfer of a dimethylallyl group onto the adenine at position 37 in tRNAs that read codons beginning with uridine, leading to the formation of N6-(dimethylallyl)adenosine (i(6)A). In Sinorhizobium medicae (strain WSM419) (Ensifer medicae), this protein is tRNA dimethylallyltransferase.